Here is a 139-residue protein sequence, read N- to C-terminus: Arsenate reductase (139 aa).

Active-site nucleophile residues include Cys10, Cys82, and Cys89. Disulfide bonds link Cys10–Cys82 and Cys82–Cys89.

This sequence belongs to the low molecular weight phosphotyrosine protein phosphatase family. Thioredoxin-coupled ArsC subfamily.

The protein localises to the cytoplasm. The enzyme catalyses arsenate + [thioredoxin]-dithiol + H(+) = arsenite + [thioredoxin]-disulfide + H2O. Catalyzes the reduction of arsenate [As(V)] to arsenite [As(III)]. In Halalkalibacterium halodurans (strain ATCC BAA-125 / DSM 18197 / FERM 7344 / JCM 9153 / C-125) (Bacillus halodurans), this protein is Arsenate reductase.